We begin with the raw amino-acid sequence, 184 residues long: Photosystem I assembly protein Ycf4 (184 aa).

2 helical membrane passes run 22–42 and 57–77; these read FCWAFILFLGSLGFLLVGTSS and IIFFPQGIVMSFYGIAGLFIS.

Belongs to the Ycf4 family.

The protein resides in the plastid. It localises to the chloroplast thylakoid membrane. In terms of biological role, seems to be required for the assembly of the photosystem I complex. This is Photosystem I assembly protein Ycf4 from Draba nemorosa (Woodland whitlowgrass).